Here is a 40-residue protein sequence, read N- to C-terminus: Allophycocyanin alpha-B chain (40 aa).

This sequence belongs to the phycobiliprotein family. As to quaternary structure, heterodimer of an alpha and a beta chain. Post-translationally, contains one covalently linked bilin chromophore.

It is found in the cellular thylakoid membrane. Light-harvesting photosynthetic bile pigment-protein from the phycobiliprotein complex. Allophycocyanin has a maximum absorption at approximately 650 nanometers. This is Allophycocyanin alpha-B chain from Mastigocladus laminosus (Fischerella sp.).